The sequence spans 429 residues: 3-phosphoshikimate 1-carboxyvinyltransferase (429 aa).

3-phosphoshikimate contacts are provided by K20, S21, and R25. Phosphoenolpyruvate is bound at residue K20. The phosphoenolpyruvate site is built by G89 and R118. S164, S165, Q166, S192, D311, and K338 together coordinate 3-phosphoshikimate. Q166 is a phosphoenolpyruvate binding site. D311 acts as the Proton acceptor in catalysis. Phosphoenolpyruvate contacts are provided by R342 and R384.

This sequence belongs to the EPSP synthase family. Monomer.

It is found in the cytoplasm. The catalysed reaction is 3-phosphoshikimate + phosphoenolpyruvate = 5-O-(1-carboxyvinyl)-3-phosphoshikimate + phosphate. It functions in the pathway metabolic intermediate biosynthesis; chorismate biosynthesis. In terms of biological role, catalyzes the transfer of the enolpyruvyl moiety of phosphoenolpyruvate (PEP) to the 5-hydroxyl of shikimate-3-phosphate (S3P) to produce enolpyruvyl shikimate-3-phosphate and inorganic phosphate. This chain is 3-phosphoshikimate 1-carboxyvinyltransferase, found in Methanococcus maripaludis (strain C5 / ATCC BAA-1333).